The chain runs to 621 residues: Glutathione-regulated potassium-efflux system protein KefC (621 aa).

12 helical membrane passes run 9 to 29 (ALIYLGAAALIVPIASVLGLG), 30 to 50 (SVLGYLIAGCIIGPWALRLVN), 54 to 74 (AILHFAEIGVVLMLVAMGLEL), 90 to 110 (GALQMVACGVLIGLFCMLLGL), 114 to 134 (VAELIGMTLALSSTAIAMQAM), 149 to 169 (FAVLLFQDIAAIPLVAMIPLL), 178 to 198 (LMAFALSALKVAAALALVVVL), 232 to 252 (LLLEEVGLSMAMGAFLAGVLL), 270 to 290 (GLLLGLFFIGVGMSIDFAPWS), 296 to 316 (IVILLVGFPAIKMLMLWLIAQ), 326 to 346 (RWFAVLLGQGSEFAFVVFGPA), and 359 to 379 (ALTLAVALSMATTPILLVLLT). The RCK N-terminal domain maps to 399 to 518 (QPRVIVAGFG…AGVEAPERET (120 aa)). Residues 598–621 (GWQGTEEGRHTGDIADEPENKPSA) form a disordered region.

This sequence belongs to the monovalent cation:proton antiporter 2 (CPA2) transporter (TC 2.A.37) family. KefC subfamily. As to quaternary structure, homodimer. Interacts with the regulatory subunit KefF.

It localises to the cell inner membrane. Functionally, pore-forming subunit of a potassium efflux system that confers protection against electrophiles. Catalyzes K(+)/H(+) antiport. The chain is Glutathione-regulated potassium-efflux system protein KefC from Klebsiella aerogenes (Enterobacter aerogenes).